The sequence spans 332 residues: Transaldolase (332 aa).

The Schiff-base intermediate with substrate role is filled by lysine 135.

Belongs to the transaldolase family. Type 1 subfamily. As to quaternary structure, homodimer.

The protein localises to the cytoplasm. The catalysed reaction is D-sedoheptulose 7-phosphate + D-glyceraldehyde 3-phosphate = D-erythrose 4-phosphate + beta-D-fructose 6-phosphate. It participates in carbohydrate degradation; pentose phosphate pathway; D-glyceraldehyde 3-phosphate and beta-D-fructose 6-phosphate from D-ribose 5-phosphate and D-xylulose 5-phosphate (non-oxidative stage): step 2/3. In terms of biological role, transaldolase is important for the balance of metabolites in the pentose-phosphate pathway. This chain is Transaldolase, found in Prochlorococcus marinus (strain NATL1A).